Consider the following 826-residue polypeptide: Outer membrane usher protein YehB (826 aa).

Positions 1–22 are cleaved as a signal peptide; it reads MLRMTPLASAIVALLLGIEAYA. Residues C809 and C825 are joined by a disulfide bond.

Belongs to the fimbrial export usher family.

The protein resides in the cell outer membrane. Functionally, part of the yehABCD fimbrial operon. Could contribute to adhesion to various surfaces in specific environmental niches. Probably involved in the export and assembly of fimbrial subunits across the outer membrane. This Escherichia coli (strain K12) protein is Outer membrane usher protein YehB (yehB).